A 594-amino-acid polypeptide reads, in one-letter code: Aspartate--tRNA(Asp/Asn) ligase (594 aa).

Glu175 is a binding site for L-aspartate. The aspartate stretch occupies residues 199 to 202; sequence QQFK. 2 residues coordinate L-aspartate: Arg221 and His455. ATP is bound at residue 221–223; the sequence is RDE. ATP is bound at residue Glu488. Arg495 lines the L-aspartate pocket. An ATP-binding site is contributed by 540 to 543; sequence GIDR.

The protein belongs to the class-II aminoacyl-tRNA synthetase family. Type 1 subfamily. Homodimer.

The protein localises to the cytoplasm. The catalysed reaction is tRNA(Asx) + L-aspartate + ATP = L-aspartyl-tRNA(Asx) + AMP + diphosphate. In terms of biological role, aspartyl-tRNA synthetase with relaxed tRNA specificity since it is able to aspartylate not only its cognate tRNA(Asp) but also tRNA(Asn). Reaction proceeds in two steps: L-aspartate is first activated by ATP to form Asp-AMP and then transferred to the acceptor end of tRNA(Asp/Asn). The sequence is that of Aspartate--tRNA(Asp/Asn) ligase from Ruegeria sp. (strain TM1040) (Silicibacter sp.).